Reading from the N-terminus, the 403-residue chain is Sorting nexin-32 (403 aa).

The region spanning 20–168 (LQGDSSLQVE…VFLEYGQDLS (149 aa)) is the PX domain. The stretch at 258 to 335 (NQLRTSFLKL…KARTRNREVR (78 aa)) forms a coiled coil.

Belongs to the sorting nexin family.

Its function is as follows. May be involved in several stages of intracellular trafficking. The polypeptide is Sorting nexin-32 (SNX32) (Homo sapiens (Human)).